The primary structure comprises 237 residues: Thrombin-like enzyme agkihpin-1 (237 aa).

M1 is a propeptide. The Peptidase S1 domain occupies 2–228 (ILGDDECNIN…HLDWIENIIA (227 aa)). C27 and C43 are oxidised to a cystine. Catalysis depends on H42, which acts as the Charge relay system. N-linked (GlcNAc...) asparagine glycosylation occurs at N80. The Charge relay system role is filled by D87. Cystine bridges form between C119–C189, C151–C168, and C179–C204. Catalysis depends on S183, which acts as the Charge relay system.

The protein belongs to the peptidase S1 family. Snake venom subfamily. In terms of tissue distribution, expressed by the venom gland.

The protein localises to the secreted. Its activity is regulated as follows. The hydrolysis of TAMe (tosyl-arginine methyl ester) substrate is activated by Ca(2+), Fe(3+), Mg(2+) and Zn(2+), and inhibited by EDTA, PMSF and DTT. Functionally, thrombin-like enzyme that shows fibrinogenolytic activity against bovine fibrinogen alpha and beta chains, but not gamma chain. Hydrolyzes fibrin. Enhances ADP-induced human platelet aggregation. Has arginine esterase activity for TAMe (tosyl-arginine methyl ester) substrate. Reduces thrombin-induced thrombosis. Does not have hemorrhagic activity. Reduces the motility of human liver cancer HepG2 cells in a wound-healing assay. The sequence is that of Thrombin-like enzyme agkihpin-1 from Gloydius halys (Chinese water mocassin).